Reading from the N-terminus, the 3856-residue chain is Serine/threonine-protein kinase ATM (3856 aa).

Residues 108-162 (VGNLVWVMTKYKKWWPGEVVDFKADAKESFMVRSIGQSHLVSWFASSKLKPFKES) enclose the PWWP domain. A disordered region spans residues 648-681 (GIPDLNGTNTEPTLVLPQVEPTQRRRRRKKEESP). Residues 2727-3393 (VVAGSAVVCG…ILQLLALANG (667 aa)) form the FAT domain. The Bipartite nuclear localization signal signature appears at 3233 to 3249 (RKHKTKELEVFIKRFKS). The region spanning 3499-3811 (LSDSVTVMNG…GNKDATRALM (313 aa)) is the PI3K/PI4K catalytic domain. A G-loop region spans residues 3505-3511 (VMNGINA). The interval 3678–3686 (GLGDRHAMN) is catalytic loop. An activation loop region spans residues 3698-3722 (HIDLGVAFEQGLMLKTPERVPFRLT). The region spanning 3824-3856 (EMRSIHGQAQQLIQDAIDTDRLSHMFPGWGAWM) is the FATC domain.

It belongs to the PI3/PI4-kinase family. In terms of assembly, interacts with RUG3. In terms of tissue distribution, ubiquitously expressed at low levels with slightly higher levels in flower buds.

The protein localises to the nucleus. The catalysed reaction is L-seryl-[protein] + ATP = O-phospho-L-seryl-[protein] + ADP + H(+). It catalyses the reaction L-threonyl-[protein] + ATP = O-phospho-L-threonyl-[protein] + ADP + H(+). Functionally, serine/threonine protein kinase which activates checkpoint signaling upon genotoxic stresses such as ionizing radiation (IR) or DNA replication stalling. Plays a central role in the perception and response to both stress-induced damage in somatic cells and developmentally programmed DNA damage during meiosis. Recognizes the substrate consensus sequence [ST]-Q. Phosphorylates histone variant H2AX to form H2AXS139ph at double strand breaks (DSBs), thereby regulating DNA damage response mechanism. Involved in transcriptional regulation of RAD51, PARP1, GR1, and LIG4 in response to DNA double strand breaks. Plays a dual role by activating the DNA damage response at dysfunctional telomeres and yet preventing this activation at functional telomeres. Not required for telomere length homeostasis. Regulates DNA damage response (DDR) synergistically with RUG3. Together with RUG3, involved in the splicing of the ND2/NAD2 mRNA. The protein is Serine/threonine-protein kinase ATM of Arabidopsis thaliana (Mouse-ear cress).